Reading from the N-terminus, the 495-residue chain is Membrane-bound lytic murein transglycosylase F (495 aa).

The signal sequence occupies residues 1 to 30; it reads MSRIRHHRFIQSCLVISTLLITLTGCQVES. A non-LT domain region spans residues 31 to 270; it reads EPKTKLEQIR…LLEEKYFGHV (240 aa). The LT domain stretch occupies residues 272 to 495; the sequence is SFDYVDTRAF…SVSQAIETKK (224 aa). The active site involves Glu-315.

In the N-terminal section; belongs to the bacterial solute-binding protein 3 family. The protein in the C-terminal section; belongs to the transglycosylase Slt family.

Its subcellular location is the cell outer membrane. It carries out the reaction Exolytic cleavage of the (1-&gt;4)-beta-glycosidic linkage between N-acetylmuramic acid (MurNAc) and N-acetylglucosamine (GlcNAc) residues in peptidoglycan, from either the reducing or the non-reducing ends of the peptidoglycan chains, with concomitant formation of a 1,6-anhydrobond in the MurNAc residue.. Its function is as follows. Murein-degrading enzyme that degrades murein glycan strands and insoluble, high-molecular weight murein sacculi, with the concomitant formation of a 1,6-anhydromuramoyl product. Lytic transglycosylases (LTs) play an integral role in the metabolism of the peptidoglycan (PG) sacculus. Their lytic action creates space within the PG sacculus to allow for its expansion as well as for the insertion of various structures such as secretion systems and flagella. This is Membrane-bound lytic murein transglycosylase F from Aliivibrio fischeri (strain ATCC 700601 / ES114) (Vibrio fischeri).